The chain runs to 267 residues: Hydroxynaphthalene reductase-like protein Arp2 (267 aa).

I25, N45, D71, and N98 together coordinate NADP(+). Catalysis depends on proton donor residues S147 and S148. The NADP(+) site is built by Y162, K166, V195, and T197. Catalysis depends on Y162, which acts as the Proton acceptor. The Lowers pKa of active site Tyr role is filled by K166.

It belongs to the short-chain dehydrogenases/reductases (SDR) family.

In terms of biological role, hydroxynaphthalene reductase-like protein; part of the Pks2 gene cluster that mediates the formation of infectious structures (appressoria), enabling these fungi to kill insects faster. The product of the Pks2 gene cluster is different from the one of Pks1 and has still not been identified. The protein is Hydroxynaphthalene reductase-like protein Arp2 of Metarhizium acridum (strain CQMa 102).